The primary structure comprises 495 residues: UDP-N-acetylmuramoyl-L-alanyl-D-glutamate--2,6-diaminopimelate ligase (495 aa).

Position 29 (S29) interacts with UDP-N-acetyl-alpha-D-muramoyl-L-alanyl-D-glutamate. 111–117 (GTNGKTS) is an ATP binding site. UDP-N-acetyl-alpha-D-muramoyl-L-alanyl-D-glutamate contacts are provided by residues 153–154 (TT), S180, Q186, and R188. N6-carboxylysine is present on K220. Meso-2,6-diaminopimelate-binding positions include R384, 408–411 (DNPR), G459, and E463. Positions 408-411 (DNPR) match the Meso-diaminopimelate recognition motif motif.

This sequence belongs to the MurCDEF family. MurE subfamily. The cofactor is Mg(2+). Carboxylation is probably crucial for Mg(2+) binding and, consequently, for the gamma-phosphate positioning of ATP.

It localises to the cytoplasm. It catalyses the reaction UDP-N-acetyl-alpha-D-muramoyl-L-alanyl-D-glutamate + meso-2,6-diaminopimelate + ATP = UDP-N-acetyl-alpha-D-muramoyl-L-alanyl-gamma-D-glutamyl-meso-2,6-diaminopimelate + ADP + phosphate + H(+). It participates in cell wall biogenesis; peptidoglycan biosynthesis. Catalyzes the addition of meso-diaminopimelic acid to the nucleotide precursor UDP-N-acetylmuramoyl-L-alanyl-D-glutamate (UMAG) in the biosynthesis of bacterial cell-wall peptidoglycan. This chain is UDP-N-acetylmuramoyl-L-alanyl-D-glutamate--2,6-diaminopimelate ligase, found in Xanthomonas campestris pv. campestris (strain 8004).